An 85-amino-acid chain; its full sequence is Scratcher peptide (85 aa).

Positions 1–24 (MTSVQSVTCCCLLWLMLSVQPITP) are cleaved as a signal peptide. Positions 25–38 (GSPGPAQLSRERSF) are excised as a propeptide. Residue Glu-47 is modified to 4-carboxyglutamate. Asp-67 is modified (aspartic acid 1-amide). A propeptide spanning residues 68 to 85 (KRDVVSPRIRRRKRSKAM) is cleaved from the precursor.

The protein belongs to the conotoxin J superfamily. In terms of processing, contains 2 disulfide bonds. Expressed by the venom duct.

It is found in the secreted. Functionally, causes scratching in mice. The sequence is that of Scratcher peptide from Conus geographus (Geography cone).